We begin with the raw amino-acid sequence, 299 residues long: Oxygen-dependent coproporphyrinogen-III oxidase (299 aa).

Residue serine 92 participates in substrate binding. Mn(2+) is bound by residues histidine 96 and histidine 106. Histidine 106 acts as the Proton donor in catalysis. Position 108–110 (108–110) interacts with substrate; sequence NVR. Mn(2+) is bound by residues histidine 145 and histidine 175. Positions 240 to 275 are important for dimerization; the sequence is YVEFNLVWDRGTLFGLQTGGRTESILMSMPPLVRWE. Substrate is bound at residue 258–260; the sequence is GGR.

Belongs to the aerobic coproporphyrinogen-III oxidase family. As to quaternary structure, homodimer. It depends on Mn(2+) as a cofactor.

Its subcellular location is the cytoplasm. The enzyme catalyses coproporphyrinogen III + O2 + 2 H(+) = protoporphyrinogen IX + 2 CO2 + 2 H2O. Its pathway is porphyrin-containing compound metabolism; protoporphyrin-IX biosynthesis; protoporphyrinogen-IX from coproporphyrinogen-III (O2 route): step 1/1. Functionally, involved in the heme biosynthesis. Catalyzes the aerobic oxidative decarboxylation of propionate groups of rings A and B of coproporphyrinogen-III to yield the vinyl groups in protoporphyrinogen-IX. The protein is Oxygen-dependent coproporphyrinogen-III oxidase of Escherichia coli O157:H7.